A 186-amino-acid chain; its full sequence is Inosine/xanthosine triphosphatase (186 aa).

Gln-75 contributes to the Mg(2+) binding site.

It belongs to the YjjX NTPase family. In terms of assembly, homodimer. The cofactor is Mg(2+). It depends on Mn(2+) as a cofactor.

It catalyses the reaction XTP + H2O = XDP + phosphate + H(+). The catalysed reaction is ITP + H2O = IDP + phosphate + H(+). In terms of biological role, phosphatase that hydrolyzes non-canonical purine nucleotides such as XTP and ITP to their respective diphosphate derivatives. Probably excludes non-canonical purines from DNA/RNA precursor pool, thus preventing their incorporation into DNA/RNA and avoiding chromosomal lesions. The protein is Inosine/xanthosine triphosphatase of Shewanella baltica (strain OS195).